Reading from the N-terminus, the 387-residue chain is Ferrochelatase (387 aa).

Fe cation is bound by residues histidine 196 and glutamate 277.

This sequence belongs to the ferrochelatase family.

The protein localises to the cytoplasm. It carries out the reaction heme b + 2 H(+) = protoporphyrin IX + Fe(2+). Its pathway is porphyrin-containing compound metabolism; protoheme biosynthesis; protoheme from protoporphyrin-IX: step 1/1. In terms of biological role, catalyzes the ferrous insertion into protoporphyrin IX. In Rippkaea orientalis (strain PCC 8801 / RF-1) (Cyanothece sp. (strain PCC 8801)), this protein is Ferrochelatase.